The following is a 357-amino-acid chain: tRNA-specific 2-thiouridylase MnmA (357 aa).

ATP-binding positions include 7 to 14 (GMSGGVDS) and M33. C103 (nucleophile) is an active-site residue. An intrachain disulfide couples C103 to C200. ATP is bound at residue G127. The interval 150–152 (KDQ) is interaction with tRNA. C200 (cysteine persulfide intermediate) is an active-site residue. An interaction with tRNA region spans residues 306 to 307 (RY).

This sequence belongs to the MnmA/TRMU family.

It localises to the cytoplasm. The enzyme catalyses S-sulfanyl-L-cysteinyl-[protein] + uridine(34) in tRNA + AH2 + ATP = 2-thiouridine(34) in tRNA + L-cysteinyl-[protein] + A + AMP + diphosphate + H(+). In terms of biological role, catalyzes the 2-thiolation of uridine at the wobble position (U34) of tRNA, leading to the formation of s(2)U34. The polypeptide is tRNA-specific 2-thiouridylase MnmA (Lachnoclostridium phytofermentans (strain ATCC 700394 / DSM 18823 / ISDg) (Clostridium phytofermentans)).